Reading from the N-terminus, the 139-residue chain is Ribosomal RNA large subunit methyltransferase H (139 aa).

S-adenosyl-L-methionine is bound by residues Leu57, Gly88, and 107–112; that span reads LSAMTF.

This sequence belongs to the RNA methyltransferase RlmH family. Homodimer.

It localises to the cytoplasm. It catalyses the reaction pseudouridine(1915) in 23S rRNA + S-adenosyl-L-methionine = N(3)-methylpseudouridine(1915) in 23S rRNA + S-adenosyl-L-homocysteine + H(+). Specifically methylates the pseudouridine at position 1915 (m3Psi1915) in 23S rRNA. This chain is Ribosomal RNA large subunit methyltransferase H, found in Solibacter usitatus (strain Ellin6076).